Consider the following 239-residue polypeptide: tRNA (guanine-N(7)-)-methyltransferase (239 aa).

Residues glutamate 69, glutamate 94, aspartate 121, and aspartate 144 each coordinate S-adenosyl-L-methionine. Residue aspartate 144 is part of the active site. Residues lysine 148, aspartate 180, and 217-220 each bind substrate; that span reads TKFE.

It belongs to the class I-like SAM-binding methyltransferase superfamily. TrmB family.

It carries out the reaction guanosine(46) in tRNA + S-adenosyl-L-methionine = N(7)-methylguanosine(46) in tRNA + S-adenosyl-L-homocysteine. Its pathway is tRNA modification; N(7)-methylguanine-tRNA biosynthesis. In terms of biological role, catalyzes the formation of N(7)-methylguanine at position 46 (m7G46) in tRNA. The chain is tRNA (guanine-N(7)-)-methyltransferase from Alcanivorax borkumensis (strain ATCC 700651 / DSM 11573 / NCIMB 13689 / SK2).